Reading from the N-terminus, the 549-residue chain is Lysine-specific demethylase JMJ31 (549 aa).

The region spanning 125–296 is the JmjC domain; the sequence is DYRPGQIYLA…SNMPEHMDSY (172 aa). Positions 184, 186, and 266 each coordinate Fe cation.

It belongs to the JARID1 histone demethylase family. The cofactor is Fe(2+). In terms of tissue distribution, mostly expressed in leaves and inflorescences, and, to a lower extent, in roots, siliques and stems.

Its subcellular location is the nucleus. Functionally, may function as histone H3 lysine demethylase and be involved in regulation of gene expression. The chain is Lysine-specific demethylase JMJ31 from Arabidopsis thaliana (Mouse-ear cress).